Reading from the N-terminus, the 156-residue chain is Large ribosomal subunit protein uL15 (156 aa).

Positions 26–46 (GIGCGKGKTSGRGHKGQKARS) are disordered. Over residues 34–43 (TSGRGHKGQK) the composition is skewed to basic residues.

Belongs to the universal ribosomal protein uL15 family. In terms of assembly, part of the 50S ribosomal subunit.

In terms of biological role, binds to the 23S rRNA. In Ehrlichia canis (strain Jake), this protein is Large ribosomal subunit protein uL15.